A 369-amino-acid polypeptide reads, in one-letter code: Glutamate 5-kinase (369 aa).

An ATP-binding site is contributed by Lys-14. Ser-56, Asp-143, and Asn-155 together coordinate substrate. ATP contacts are provided by residues 175–176 (SD) and 215–221 (TGGMASK). The 75-residue stretch at 277-351 (AGKIRLDQGA…GMKTQELPDD (75 aa)) folds into the PUA domain.

Belongs to the glutamate 5-kinase family.

The protein resides in the cytoplasm. It catalyses the reaction L-glutamate + ATP = L-glutamyl 5-phosphate + ADP. The protein operates within amino-acid biosynthesis; L-proline biosynthesis; L-glutamate 5-semialdehyde from L-glutamate: step 1/2. In terms of biological role, catalyzes the transfer of a phosphate group to glutamate to form L-glutamate 5-phosphate. This chain is Glutamate 5-kinase, found in Corynebacterium efficiens (strain DSM 44549 / YS-314 / AJ 12310 / JCM 11189 / NBRC 100395).